A 219-amino-acid polypeptide reads, in one-letter code: ATP phosphoribosyltransferase (219 aa).

It belongs to the ATP phosphoribosyltransferase family. Short subfamily. Heteromultimer composed of HisG and HisZ subunits.

Its subcellular location is the cytoplasm. The catalysed reaction is 1-(5-phospho-beta-D-ribosyl)-ATP + diphosphate = 5-phospho-alpha-D-ribose 1-diphosphate + ATP. Its pathway is amino-acid biosynthesis; L-histidine biosynthesis; L-histidine from 5-phospho-alpha-D-ribose 1-diphosphate: step 1/9. Functionally, catalyzes the condensation of ATP and 5-phosphoribose 1-diphosphate to form N'-(5'-phosphoribosyl)-ATP (PR-ATP). Has a crucial role in the pathway because the rate of histidine biosynthesis seems to be controlled primarily by regulation of HisG enzymatic activity. This chain is ATP phosphoribosyltransferase, found in Paramagnetospirillum magneticum (strain ATCC 700264 / AMB-1) (Magnetospirillum magneticum).